The following is a 429-amino-acid chain: Growth/differentiation factor 2 (429 aa).

The first 22 residues, 1-22 (MCPGALWVALPLLSLLAGSLQG), serve as a signal peptide directing secretion. The propeptide occupies 23-319 (KPLQSWGRGS…AGSTLARRKR (297 aa)). N-linked (GlcNAc...) asparagine glycans are attached at residues Asn71 and Asn136. Residues 283–301 (VLKKLSKDGSTEAGESSHE) are compositionally biased toward basic and acidic residues. A disordered region spans residues 283–308 (VLKKLSKDGSTEAGESSHEEDTDGHV). 3 disulfides stabilise this stretch: Cys327–Cys393, Cys356–Cys426, and Cys360–Cys428. Residues 402 to 416 (SVLYKDDMGVPTLKY) form an interaction with ENG region.

The protein belongs to the TGF-beta family. Homodimer; disulfide-linked. Detected in extracellular fluid as mature homodimer, and in complex with its propeptide. Interacts with ACVRL1, BMPR2 and ACVR2B with high affinity (in vitro). Identified in a complex with ACVRL1 and ACVR2B. Has ten times lower affinity for ACVR2A (in vitro). Interacts with ENG, forming a heterotetramer with a 2:2 stoichiometry. Can form a heteromeric complex with ENG and ACVRL1. Interacts with type I receptor ACVR1. In terms of processing, a reversible disulfide bond can be formed between the two subunits in the homodimer; this has no effect on GDF2 activity. Detected in blood plasma (at protein level).

The protein resides in the secreted. Potent circulating inhibitor of angiogenesis. Signals through the type I activin receptor ACVRL1 but not other Alks. Signaling through SMAD1 in endothelial cells requires TGF-beta coreceptor endoglin/ENG. The chain is Growth/differentiation factor 2 (GDF2) from Homo sapiens (Human).